Reading from the N-terminus, the 484-residue chain is Cysteine--tRNA ligase (484 aa).

Zn(2+) is bound at residue C29. Residues 31–41 carry the 'HIGH' region motif; the sequence is PTVQSAPHIGH. Zn(2+) is bound by residues C219, H244, and E248. The 'KMSKS' region motif lies at 275 to 279; the sequence is KMSKS. K278 contributes to the ATP binding site.

The protein belongs to the class-I aminoacyl-tRNA synthetase family. In terms of assembly, monomer. The cofactor is Zn(2+).

The protein resides in the cytoplasm. It carries out the reaction tRNA(Cys) + L-cysteine + ATP = L-cysteinyl-tRNA(Cys) + AMP + diphosphate. The chain is Cysteine--tRNA ligase from Clavibacter michiganensis subsp. michiganensis (strain NCPPB 382).